Here is a 209-residue protein sequence, read N- to C-terminus: Large ribosomal subunit protein uL3 (209 aa).

The segment at 113-155 (TSRGHGYQGNIKRHHQSRGPETHGSRYHRIPGSMGSIINRVPK) is disordered.

The protein belongs to the universal ribosomal protein uL3 family. Part of the 50S ribosomal subunit. Forms a cluster with proteins L14 and L19.

In terms of biological role, one of the primary rRNA binding proteins, it binds directly near the 3'-end of the 23S rRNA, where it nucleates assembly of the 50S subunit. In Lactobacillus delbrueckii subsp. bulgaricus (strain ATCC 11842 / DSM 20081 / BCRC 10696 / JCM 1002 / NBRC 13953 / NCIMB 11778 / NCTC 12712 / WDCM 00102 / Lb 14), this protein is Large ribosomal subunit protein uL3.